A 158-amino-acid chain; its full sequence is Small ribosomal subunit protein uS7 (158 aa).

The protein belongs to the universal ribosomal protein uS7 family. In terms of assembly, part of the 30S ribosomal subunit. Contacts proteins S9 and S11.

One of the primary rRNA binding proteins, it binds directly to 16S rRNA where it nucleates assembly of the head domain of the 30S subunit. Is located at the subunit interface close to the decoding center, probably blocks exit of the E-site tRNA. In Gluconacetobacter diazotrophicus (strain ATCC 49037 / DSM 5601 / CCUG 37298 / CIP 103539 / LMG 7603 / PAl5), this protein is Small ribosomal subunit protein uS7.